A 231-amino-acid polypeptide reads, in one-letter code: Ribonuclease 3 (231 aa).

The RNase III domain maps to 1-134; that stretch reads MKTLEKKLAE…FLGALLLDAG (134 aa). Glutamate 47 contacts Mg(2+). Aspartate 51 is a catalytic residue. Mg(2+) contacts are provided by aspartate 120 and glutamate 123. Residue glutamate 123 is part of the active site. A DRBM domain is found at 160–229; it reads DYKTALQELL…AKNALEKLQR (70 aa).

This sequence belongs to the ribonuclease III family. Homodimer. The cofactor is Mg(2+).

The protein localises to the cytoplasm. It catalyses the reaction Endonucleolytic cleavage to 5'-phosphomonoester.. Its function is as follows. Digests double-stranded RNA. Involved in the processing of primary rRNA transcript to yield the immediate precursors to the large and small rRNAs (23S and 16S). Also processes some mRNAs, and tRNAs when they are encoded in the rRNA operon. Functionally, CRISPR (clustered regularly interspaced short palindromic repeat) is an adaptive immune system that provides protection against mobile genetic elements (viruses, transposable elements and conjugative plasmids). CRISPR clusters contain spacers, sequences complementary to antecedent mobile elements, and target invading nucleic acids. CRISPR clusters are transcribed and processed into CRISPR RNA (crRNA). In this organism endogenous ribonuclease 3 and Cas9 are required for correct coprocessing of pre-crRNA and the trans-encoded small RNA (tracrRNA). Cas9, crRNA and tracrRNA are required for cleavage of invading DNA. Complements pre-crRNA and tracrRNA coprocessing defects in an rnc deletion in S.pyogenes strain 370. This chain is Ribonuclease 3, found in Streptococcus mutans serotype c (strain ATCC 700610 / UA159).